The primary structure comprises 243 residues: Collagen triple helix repeat-containing protein 1 (243 aa).

Residues 1–30 form the signal peptide; sequence MRPQGPAASPQRLRGLLLLLLLQLPAPSSA. The Collagen-like domain maps to 57–90; that stretch reads QGPAGVPGRDGSPGANGIPGTPGIPGRDGFKGEK. Residues 62 to 85 form a disordered region; sequence VPGRDGSPGANGIPGTPGIPGRDG. The N-linked (GlcNAc...) asparagine glycan is linked to Asn186.

In terms of processing, N-glycosylated. As to expression, isoform 1 is expressed in calcified atherosclerotic plaque and chondrocyte-like cells.

It localises to the secreted. It is found in the extracellular space. The protein resides in the extracellular matrix. May act as a negative regulator of collagen matrix deposition. The chain is Collagen triple helix repeat-containing protein 1 (CTHRC1) from Homo sapiens (Human).